The primary structure comprises 115 residues: ComG operon protein 5 (115 aa).

Residues 1–7 (MWRENKG) constitute a propeptide, leader sequence. F8 bears the N-methylphenylalanine mark. A helical membrane pass occupies residues 13–31 (TMSALSLWLFVLLTVVPLW).

Post-translationally, processing of ComGE in competent cells requires ComC.

It is found in the cell membrane. It localises to the cell surface. Functionally, required for transformation and DNA binding. The polypeptide is ComG operon protein 5 (comGE) (Bacillus subtilis (strain 168)).